Here is a 292-residue protein sequence, read N- to C-terminus: Probable ABC transporter phosphonate/phosphite binding protein PhnD2 (292 aa).

Residues 1-20 (MKLKSLLSVFTISIVALTSA) form the signal peptide. A lipid anchor (N-palmitoyl cysteine) is attached at C21. C21 is lipidated: S-diacylglycerol cysteine.

Belongs to the phosphate/phosphite/phosphonate binding protein family. The complex may be composed of two ATP-binding proteins (PhnC2), two transmembrane proteins (PhnE2) and a solute-binding protein (PhnD2).

Its subcellular location is the cell membrane. Probably part of the ABC transporter complex PhnC2D2E2. Binds strongly to methylphosphonate (MPn), ethylphosphonate (EPn) and inorganic phosphite. In Prochlorococcus marinus (strain MIT 9301), this protein is Probable ABC transporter phosphonate/phosphite binding protein PhnD2.